Consider the following 501-residue polypeptide: Maturase K (501 aa).

It belongs to the intron maturase 2 family. MatK subfamily.

Its subcellular location is the plastid. The protein localises to the chloroplast. Functionally, usually encoded in the trnK tRNA gene intron. Probably assists in splicing its own and other chloroplast group II introns. This is Maturase K from Amborella trichopoda.